The following is a 266-amino-acid chain: GTP cyclohydrolase MptA (266 aa).

It belongs to the GTP cyclohydrolase IV family. Homodimer. Requires Fe(2+) as cofactor.

It carries out the reaction GTP + H2O = 7,8-dihydroneopterin 2',3'-cyclic phosphate + formate + diphosphate + H(+). It functions in the pathway cofactor biosynthesis; 5,6,7,8-tetrahydromethanopterin biosynthesis. Its function is as follows. Converts GTP to 7,8-dihydro-D-neopterin 2',3'-cyclic phosphate, the first intermediate in the biosynthesis of coenzyme methanopterin. This Pyrococcus abyssi (strain GE5 / Orsay) protein is GTP cyclohydrolase MptA.